Consider the following 451-residue polypeptide: Putative metabolite transport protein YyaJ (451 aa).

At 1-29 (MNTIFKQKNTHPFSNAANRLDRLPISRVH) the chain is on the cytoplasmic side. Residues 30–50 (FQVLTALGIVYFFDLADLFTL) traverse the membrane as a helical segment. The Extracellular portion of the chain corresponds to 51 to 60 (SNVAPALIEH). A helical transmembrane segment spans residues 61 to 81 (WGIPLSTIANVTAASFLGMFL). Topologically, residues 82-97 (GASLGGRLSDRIGRKK) are cytoplasmic. The chain crosses the membrane as a helical span at residues 98 to 118 (ALNLFVFVFSIASLCNAAAWD). At 119-124 (IPSLMT) the chain is on the extracellular side. Residues 125–145 (FRFLTGFGVAAAMVITNSYLA) form a helical membrane-spanning segment. The Cytoplasmic portion of the chain corresponds to 146-157 (EFFPSSVRGKYI). A helical membrane pass occupies residues 158-178 (SFCAMIGLIGVPITNIVSAFV). Topologically, residues 179 to 182 (IPLG) are extracellular. A helical membrane pass occupies residues 183–203 (SWGWRLVFVWGAVGLIYFFFI). Residues 204-270 (HRLEESPRWH…LLKGRNLKIT (67 aa)) are Cytoplasmic-facing. The chain crosses the membrane as a helical span at residues 271-291 (IVLSAVWIFETFGFYGFASWV). Over 292-305 (PSLLKSNGVTMENT) the chain is Extracellular. A helical membrane pass occupies residues 306–326 (LWYNVLHSVGAPLGALLGSMI). The Cytoplasmic segment spans residues 327-333 (SERFQRK). A helical transmembrane segment spans residues 334 to 354 (WILAASAFLTAIAGLLYGMTF). Residues 355-357 (IPI) lie on the Extracellular side of the membrane. Residues 358–378 (MIIVFGFIVNITERVFTSNLY) form a helical membrane-spanning segment. The Cytoplasmic segment spans residues 379-396 (AYTSEPYPTEYRSSGSGL). A helical transmembrane segment spans residues 397-417 (AYGLGRFSNIFGSLLVGFIAV). Residues 418–421 (QLGY) lie on the Extracellular side of the membrane. The chain crosses the membrane as a helical span at residues 422–442 (ISVFLFIGGCWLACSLLLIFF). The Cytoplasmic segment spans residues 443–451 (GPNTNAKQI).

This sequence belongs to the major facilitator superfamily. Sugar transporter (TC 2.A.1.1) family.

Its subcellular location is the cell membrane. The polypeptide is Putative metabolite transport protein YyaJ (yyaJ) (Bacillus subtilis (strain 168)).